Here is a 711-residue protein sequence, read N- to C-terminus: MKSMNIAASSELVSRLSSHRRVVALGDTDFTDVAAVVITAADSRSGILALLKRTGFHLPVFLYSEHAVELPAGVTAVINGNEQQWLELESAACQYEENLLPPFYDTLTQYVEMGNSTFACPGHQHGAFFKKHPAGRHFYDFFGENVFRADMCNADVKLGDLLIHEGSAKDAQKFAAKVFHADKTYFVLNGTSAANKVVTNALLTRGDLVLFDRNNHKSNHHGALIQAGATPVYLEASRNPFGFIGGIDAHCFNEEYLRQQIRDVAPEKADLPRPYRLAIIQLGTYDGTVYNARQVIDTVGHLCDYILFDSAWVGYEQFIPMMADSSPLLLELNENDPGIFVTQSVHKQQAGFSQTSQIHKKDNHIRGQARFCPHKRLNNAFMLHASTSPFYPLFAALDVNAKIHEGESGRRLWAECVEIGIEARKAILARCKLFRPFIPPVVDGKLWQDYPTSVLASDRRFFSFEPGAKWHGFEGYAADQYFVDPCKLLLTTPGIDAETGEYSDFGVPATILAHYLRENGIVPEKCDLNSILFLLTPAESHEKLAQLVAMLAQFEQHIEDDSPLVEVLPSVYNKYPVRYRDYTLRQLCQEMHDLYVSFDVKDLQKAMFRQQSFPSVVMNPQDAHSAYIRGDVELVRIRDAEGRIAAEGALPYPPGVLCVVPGEVWGGAVQRYFLALEEGVNLLPGFSPELQGVYSETDADGVKRLYGYVLK.

An N6-(pyridoxal phosphate)lysine modification is found at Lys-347.

It belongs to the Orn/Lys/Arg decarboxylase class-I family. Pyridoxal 5'-phosphate serves as cofactor.

The enzyme catalyses L-ornithine + H(+) = putrescine + CO2. It participates in amine and polyamine biosynthesis; putrescine biosynthesis via L-ornithine pathway; putrescine from L-ornithine: step 1/1. The polypeptide is Constitutive ornithine decarboxylase (speC) (Escherichia coli (strain K12)).